The following is a 148-amino-acid chain: General odorant-binding protein 69a (148 aa).

An N-terminal signal peptide occupies residues 1-23; the sequence is MVARHFSFFLALLILYDLIPSNQ. 3 cysteine pairs are disulfide-bonded: Cys42–Cys74, Cys70–Cys121, and Cys112–Cys130.

The protein belongs to the PBP/GOBP family. Expressed in the antenna, mostly on the anterior surface of the third antennal segment. Expressed in auxiliary cells and the third antennal segment and exported to the sensillar lymph (at protein level).

The protein localises to the secreted. Functionally, odorant-binding protein required for olfactory behavior and activity of pheromone-sensitive neurons in response to the male-specific pheromone cis-vaccenyl acetate (cVA). Modulates social responsivity differently in males and females, regulating male aggression and female receptivity respectively. This Drosophila melanogaster (Fruit fly) protein is General odorant-binding protein 69a (Obp69a).